The chain runs to 123 residues: Ribonuclease P protein component (123 aa).

This sequence belongs to the RnpA family. As to quaternary structure, consists of a catalytic RNA component (M1 or rnpB) and a protein subunit.

The catalysed reaction is Endonucleolytic cleavage of RNA, removing 5'-extranucleotides from tRNA precursor.. RNaseP catalyzes the removal of the 5'-leader sequence from pre-tRNA to produce the mature 5'-terminus. It can also cleave other RNA substrates such as 4.5S RNA. The protein component plays an auxiliary but essential role in vivo by binding to the 5'-leader sequence and broadening the substrate specificity of the ribozyme. The polypeptide is Ribonuclease P protein component (Streptomyces avermitilis (strain ATCC 31267 / DSM 46492 / JCM 5070 / NBRC 14893 / NCIMB 12804 / NRRL 8165 / MA-4680)).